The following is a 471-amino-acid chain: Pancreatic lipase-related protein 2 (471 aa).

The first 17 residues, 1 to 17 (MLPSWTIGLLLLATVRG), serve as a signal peptide directing secretion. A disulfide bridge connects residues Cys-21 and Cys-27. N-linked (GlcNAc...) asparagine glycosylation occurs at Asn-71. Positions 93 to 105 (IHGFIDKGEDSWP) are required for galactolipase activity. Cysteines 109 and 120 form a disulfide. Ser-171 functions as the Nucleophile in the catalytic mechanism. Asp-195 functions as the Charge relay system in the catalytic mechanism. Glu-206, Arg-209, Asp-211, and Asp-214 together coordinate Ca(2+). Cys-256 and Cys-280 are oxidised to a cystine. Residues 257–279 (QKNTLSTIVDVDGIWEGIEDFAA) are required for galactolipase activity. Catalysis depends on His-282, which acts as the Charge relay system. Disulfide bonds link Cys-304/Cys-317 and Cys-320/Cys-325. Asn-355 is a glycosylation site (N-linked (GlcNAc...) asparagine). The PLAT domain maps to 359 to 471 (WRYRVSVTLA…ENILQTLNPC (113 aa)). A disulfide bridge links Cys-455 with Cys-471.

The protein belongs to the AB hydrolase superfamily. Lipase family.

The protein localises to the secreted. It is found in the zymogen granule membrane. The protein resides in the cell projection. It localises to the neuron projection. It carries out the reaction a triacylglycerol + H2O = a diacylglycerol + a fatty acid + H(+). It catalyses the reaction a 1,2-diacyl-3-O-(beta-D-galactosyl)-sn-glycerol + 2 H2O = 3-beta-D-galactosyl-sn-glycerol + 2 a fatty acid + 2 H(+). The catalysed reaction is 1,2,3-tri-(9Z-octadecenoyl)-glycerol + H2O = di-(9Z)-octadecenoylglycerol + (9Z)-octadecenoate + H(+). The enzyme catalyses di-(9Z)-octadecenoylglycerol + H2O = (9Z-octadecenoyl)-glycerol + (9Z)-octadecenoate + H(+). It carries out the reaction (9Z-octadecenoyl)-glycerol + H2O = glycerol + (9Z)-octadecenoate + H(+). It catalyses the reaction 1-(9Z-octadecenoyl)-glycerol + H2O = glycerol + (9Z)-octadecenoate + H(+). The catalysed reaction is 1,2,3-tripropanoylglycerol + H2O = dipropanoylglycerol + propanoate + H(+). The enzyme catalyses 1,2,3-tributanoylglycerol + H2O = dibutanoylglycerol + butanoate + H(+). It carries out the reaction 1,2,3-trioctanoylglycerol + H2O = dioctanoylglycerol + octanoate + H(+). It catalyses the reaction 1,2-didecanoylglycerol + H2O = decanoylglycerol + decanoate + H(+). The catalysed reaction is long chain 1,2-diacyl-3-O-beta-D-galactosyl-sn-glycerol + H2O = long chain acyl-3-O-beta-D-galactosyl-sn-glycerol + a fatty acid + H(+). The enzyme catalyses 1,2-dioctanoyl-3-O-beta-D-galactosyl-sn-glycerol + H2O = octanoyl-3-(beta-D-galactosyl)-sn-glycerol + octanoate + H(+). It carries out the reaction 1,2-didodecanoyl-3-beta-D-galactosyl-sn-glycerol + H2O = dodecanoyl-3-beta-D-galactosyl-sn-glycerol + dodecanoate + H(+). It catalyses the reaction 1-beta-D-galactosyl-2,3-didodecanoyl-sn-glycerol + H2O = 1-beta-D-galactosyl-dodecanoyl-sn-glycerol + dodecanoate + H(+). The catalysed reaction is a 1,2-diacyl-3-O-[alpha-D-galactosyl-(1-&gt;6)-beta-D-galactosyl]-sn-glycerol + H2O = acyl-3-O-[alpha-D-galactosyl-(1-&gt;6)-beta-D-galactosyl]-sn-glycerol + a fatty acid + H(+). The enzyme catalyses long chain 1,2-diacyl-3-O-[alpha-D-galactosyl-(1-&gt;6)-beta-D-galactosyl]-sn-glycerol + H2O = long chain acyl-3-O-[alpha-D-galactosyl-(1-&gt;6)-beta-D-galactosyl]-sn-glycerol + a fatty acid + H(+). It carries out the reaction 1,2-dioctanoyl-3-O-[alpha-D-galactosyl-(1-&gt;6)-beta-D-galactosyl]-sn-glycerol + H2O = octanoyl-3-O-[alpha-D-galactosyl-(1-&gt;6)-beta-D-galactosyl]-sn-glycerol + octanoate + H(+). It catalyses the reaction 1,2-didodecanoyl-3-O-[alpha-D-galactosyl-(1-&gt;6)-beta-D-galactosyl]-sn-glycerol + H2O = dodecanoyl-3-O-[alpha-D-galactosyl-(1-&gt;6)-beta-D-galactosyl]-sn-glycerol + dodecanoate + H(+). The catalysed reaction is a 1,2-diacyl-sn-glycero-3-phosphocholine + H2O = a monoacyl-sn-glycero-3-phosphocholine + a fatty acid + H(+). It functions in the pathway glycerolipid metabolism; triacylglycerol degradation. It participates in glycolipid metabolism. With respect to regulation, up-regulated by CLPS in the presence of increasing concentrations of bile salts. In terms of biological role, lipase that primarily hydrolyzes triglycerides and galactosylglycerides. In neonates, may play a major role in pancreatic digestion of dietary fats such as milk fat globules enriched in long-chain triglycerides. Hydrolyzes short-, medium- and long-chain fatty acyls in triglycerides without apparent positional specificity. Can completely deacylate triacylglycerols. When the liver matures and bile salt synthesis increases, likely functions mainly as a galactolipase and monoacylglycerol lipase. Hydrolyzes monogalactosyldiglycerols (MGDG) and digalactosyldiacylglycerols (DGDG) present in a plant-based diet, releasing long-chain polyunsaturated fatty acids. Hydrolyzes medium- and long-chain fatty acyls in galactolipids. May act together with LIPF to hydrolyze partially digested triglycerides. Hydrolyzes long-chain monoglycerides with high efficiency. In cytotoxic T cells, contributes to perforin-dependent cell lysis, but is unlikely to mediate direct cytotoxicity. Also has low phospholipase activity. In neurons, required for the localization of the phospholipid 1-oleoyl-2-palmitoyl-PC (OPPC) to neurite tips through acyl chain remodeling of membrane phospholipids. The resulting OPPC-rich lipid membrane domain recruits the t-SNARE protein STX4 by selectively interacting with the STX4 transmembrane domain and this promotes surface expression of the dopamine transporter SLC6A3/DAT at neurite tips by facilitating fusion of SLC6A3-containing transport vesicles with the plasma membrane. The polypeptide is Pancreatic lipase-related protein 2 (PNLIPRP2) (Sus scrofa (Pig)).